The primary structure comprises 106 residues: Large ribosomal subunit protein eL42 (106 aa).

The protein belongs to the eukaryotic ribosomal protein eL42 family.

The chain is Large ribosomal subunit protein eL42 (RPL44) from Candida tropicalis (Yeast).